The following is a 373-amino-acid chain: MKSGRFIGVMSGTSLDGVDVVLAAIDETMVAQQASLTWPIPVHLKKGILDICQGQPLTLSQLGQLDTQLGRLFAQAVNALLARQRLQPRDIVAIGCHGQTVWHEPTGEAPHTLQIGDNNHIVAHTGITVVGDFRRRDIALGGQGAPLVPAFHHALLGHPTEKRMVLNIGGIANLSLLFPGQAVRGYDTGPGNMLMDAWIWRQCAQPYDKDAAWAKEGQVILPLLQKMLRDPYFAASAPKSTGREYFNYGWLERHLTAFSGADARDVQATLAELTAVSIAQQVLLNGGCERLMVCGGGSRNPLVMARLAALLPGIEVSTTDKAGISGDDMEALAFAWLAWRTLAGLPGNLPSVTGATEASVLGAIYPANPITQS.

12–19 lines the ATP pocket; that stretch reads GTSLDGVD.

Belongs to the anhydro-N-acetylmuramic acid kinase family.

It catalyses the reaction 1,6-anhydro-N-acetyl-beta-muramate + ATP + H2O = N-acetyl-D-muramate 6-phosphate + ADP + H(+). Its pathway is amino-sugar metabolism; 1,6-anhydro-N-acetylmuramate degradation. It functions in the pathway cell wall biogenesis; peptidoglycan recycling. Functionally, catalyzes the specific phosphorylation of 1,6-anhydro-N-acetylmuramic acid (anhMurNAc) with the simultaneous cleavage of the 1,6-anhydro ring, generating MurNAc-6-P. Is required for the utilization of anhMurNAc either imported from the medium or derived from its own cell wall murein, and thus plays a role in cell wall recycling. In Salmonella gallinarum (strain 287/91 / NCTC 13346), this protein is Anhydro-N-acetylmuramic acid kinase.